The sequence spans 408 residues: Putative F-box protein At1g53550 (408 aa).

The 46-residue stretch at 29–74 (TCYFDPIPVDLVINILSRLSLECIARCRCVSKLWSSIIRRPNYNQL) folds into the F-box domain.

The sequence is that of Putative F-box protein At1g53550 from Arabidopsis thaliana (Mouse-ear cress).